A 311-amino-acid chain; its full sequence is Lipoyl synthase (311 aa).

7 residues coordinate [4Fe-4S] cluster: Cys-47, Cys-52, Cys-58, Cys-73, Cys-77, Cys-80, and Ser-286. The Radical SAM core domain maps to 59-276 (WSRHTATYLA…RSVGESLGLF (218 aa)).

The protein belongs to the radical SAM superfamily. Lipoyl synthase family. [4Fe-4S] cluster is required as a cofactor.

Its subcellular location is the cytoplasm. The enzyme catalyses [[Fe-S] cluster scaffold protein carrying a second [4Fe-4S](2+) cluster] + N(6)-octanoyl-L-lysyl-[protein] + 2 oxidized [2Fe-2S]-[ferredoxin] + 2 S-adenosyl-L-methionine + 4 H(+) = [[Fe-S] cluster scaffold protein] + N(6)-[(R)-dihydrolipoyl]-L-lysyl-[protein] + 4 Fe(3+) + 2 hydrogen sulfide + 2 5'-deoxyadenosine + 2 L-methionine + 2 reduced [2Fe-2S]-[ferredoxin]. It participates in protein modification; protein lipoylation via endogenous pathway; protein N(6)-(lipoyl)lysine from octanoyl-[acyl-carrier-protein]: step 2/2. Functionally, catalyzes the radical-mediated insertion of two sulfur atoms into the C-6 and C-8 positions of the octanoyl moiety bound to the lipoyl domains of lipoate-dependent enzymes, thereby converting the octanoylated domains into lipoylated derivatives. The sequence is that of Lipoyl synthase from Chlamydia trachomatis serovar A (strain ATCC VR-571B / DSM 19440 / HAR-13).